The primary structure comprises 621 residues: Chaperone protein HtpG (621 aa).

The a; substrate-binding stretch occupies residues 1–341 (MSNQEYTFQT…SEDLPLNVSR (341 aa)). Residues 342 to 547 (EILQQNKILA…GDEQNAMMAN (206 aa)) are b. Positions 548-621 (WMRQMGQSVP…RLNSVLLKAL (74 aa)) are c.

It belongs to the heat shock protein 90 family. As to quaternary structure, homodimer.

The protein resides in the cytoplasm. Molecular chaperone. Has ATPase activity. The chain is Chaperone protein HtpG from Helicobacter pylori (strain ATCC 700392 / 26695) (Campylobacter pylori).